Here is a 279-residue protein sequence, read N- to C-terminus: Thymidylate synthase (279 aa).

Residue 132–133 (RR) participates in dUMP binding. C153 acts as the Nucleophile in catalysis. Residues 178-181 (RSND), N189, and 219-221 (HIY) contribute to the dUMP site. Position 181 (D181) interacts with (6R)-5,10-methylene-5,6,7,8-tetrahydrofolate. A (6R)-5,10-methylene-5,6,7,8-tetrahydrofolate-binding site is contributed by A278.

Belongs to the thymidylate synthase family. Bacterial-type ThyA subfamily. In terms of assembly, homodimer.

Its subcellular location is the cytoplasm. It catalyses the reaction dUMP + (6R)-5,10-methylene-5,6,7,8-tetrahydrofolate = 7,8-dihydrofolate + dTMP. The protein operates within pyrimidine metabolism; dTTP biosynthesis. Catalyzes the reductive methylation of 2'-deoxyuridine-5'-monophosphate (dUMP) to 2'-deoxythymidine-5'-monophosphate (dTMP) while utilizing 5,10-methylenetetrahydrofolate (mTHF) as the methyl donor and reductant in the reaction, yielding dihydrofolate (DHF) as a by-product. This enzymatic reaction provides an intracellular de novo source of dTMP, an essential precursor for DNA biosynthesis. This is Thymidylate synthase from Lactococcus lactis subsp. lactis (strain IL1403) (Streptococcus lactis).